Reading from the N-terminus, the 88-residue chain is Large ribosomal subunit protein bL27 (88 aa).

A disordered region spans residues M1 to R20.

Belongs to the bacterial ribosomal protein bL27 family.

The sequence is that of Large ribosomal subunit protein bL27 (rpmA) from Geobacillus stearothermophilus (Bacillus stearothermophilus).